Reading from the N-terminus, the 210-residue chain is Orotate phosphoribosyltransferase (210 aa).

5-phospho-alpha-D-ribose 1-diphosphate contacts are provided by residues arginine 94, lysine 98, histidine 100, and 120 to 128; that span reads EDLISTGGS. Serine 124 provides a ligand contact to orotate.

This sequence belongs to the purine/pyrimidine phosphoribosyltransferase family. PyrE subfamily. In terms of assembly, homodimer. Requires Mg(2+) as cofactor.

The enzyme catalyses orotidine 5'-phosphate + diphosphate = orotate + 5-phospho-alpha-D-ribose 1-diphosphate. It participates in pyrimidine metabolism; UMP biosynthesis via de novo pathway; UMP from orotate: step 1/2. Its function is as follows. Catalyzes the transfer of a ribosyl phosphate group from 5-phosphoribose 1-diphosphate to orotate, leading to the formation of orotidine monophosphate (OMP). The protein is Orotate phosphoribosyltransferase of Bacillus cytotoxicus (strain DSM 22905 / CIP 110041 / 391-98 / NVH 391-98).